Here is a 357-residue protein sequence, read N- to C-terminus: MNSIEKKQLLGLDLNQMEEFLLGLEEPRFRGRQVYKWIYQKECSSFYEMSDLPRSLRKKLDEKARVSIPRVLKQRVGKDGSRKFLMELDDKKKIECVLLPQSRDKKSSYTLCLSTQVGCPIACSFCATGQSGFQRNLKAFEIIGQYLGSKKELSKRLKSPRAELISNVVYMGMGEPLLNYDEVIKSVHMLNDPRGINLGQRRITISTSGEVAGIKKLAQENIQLTLAISLHACDNSLRDQLIPLNRKYPLEVLFPAIEDYIAFTGRRVTFEYLLLDEVNMSRNDANKMVKLLKPLLANLNLIPYNEIEGLPFKKPETAKIWQFYQWLQDGGLNVSIREERGSDINAACGQLRSDYRR.

The active-site Proton acceptor is Glu95. The 239-residue stretch at 105–343 (KKSSYTLCLS…VSIREERGSD (239 aa)) folds into the Radical SAM core domain. Cys112 and Cys348 are oxidised to a cystine. Cys119, Cys123, and Cys126 together coordinate [4Fe-4S] cluster. Residues 174 to 175 (GE), Ser206, 229 to 231 (SLH), and Asn305 contribute to the S-adenosyl-L-methionine site. The active-site S-methylcysteine intermediate is Cys348.

This sequence belongs to the radical SAM superfamily. RlmN family. It depends on [4Fe-4S] cluster as a cofactor.

It localises to the cytoplasm. It catalyses the reaction adenosine(2503) in 23S rRNA + 2 reduced [2Fe-2S]-[ferredoxin] + 2 S-adenosyl-L-methionine = 2-methyladenosine(2503) in 23S rRNA + 5'-deoxyadenosine + L-methionine + 2 oxidized [2Fe-2S]-[ferredoxin] + S-adenosyl-L-homocysteine. The enzyme catalyses adenosine(37) in tRNA + 2 reduced [2Fe-2S]-[ferredoxin] + 2 S-adenosyl-L-methionine = 2-methyladenosine(37) in tRNA + 5'-deoxyadenosine + L-methionine + 2 oxidized [2Fe-2S]-[ferredoxin] + S-adenosyl-L-homocysteine. Its function is as follows. Specifically methylates position 2 of adenine 2503 in 23S rRNA and position 2 of adenine 37 in tRNAs. The protein is Probable dual-specificity RNA methyltransferase RlmN of Syntrophomonas wolfei subsp. wolfei (strain DSM 2245B / Goettingen).